Here is a 107-residue protein sequence, read N- to C-terminus: DNA-directed RNA polymerase subunit omega (107 aa).

This sequence belongs to the RNA polymerase subunit omega family. The RNAP catalytic core consists of 2 alpha, 1 beta, 1 beta' and 1 omega subunit. When a sigma factor is associated with the core the holoenzyme is formed, which can initiate transcription.

It catalyses the reaction RNA(n) + a ribonucleoside 5'-triphosphate = RNA(n+1) + diphosphate. In terms of biological role, promotes RNA polymerase assembly. Latches the N- and C-terminal regions of the beta' subunit thereby facilitating its interaction with the beta and alpha subunits. This is DNA-directed RNA polymerase subunit omega from Mycolicibacterium smegmatis (strain ATCC 700084 / mc(2)155) (Mycobacterium smegmatis).